The primary structure comprises 1148 residues: Trafficking protein particle complex subunit 9 (1148 aa).

Ser-566 and Ser-953 each carry phosphoserine.

It belongs to the NIBP family. In terms of assembly, component of the multisubunit TRAPP (transport protein particle) complex, which includes at least TRAPPC2, TRAPPC2L, TRAPPC3, TRAPPC3L, TRAPPC4, TRAPPC5, TRAPPC8, TRAPPC9, TRAPPC10, TRAPPC11 and TRAPPC12. Directly interacts with IKBKB and MAP3K14. As to expression, expressed at high levels in muscle and kidney and to a lower extent in brain, heart and placenta.

It localises to the golgi apparatus. Its subcellular location is the cis-Golgi network. It is found in the endoplasmic reticulum. The protein localises to the cytoplasm. Functionally, functions as an activator of NF-kappa-B through increased phosphorylation of the IKK complex. May function in neuronal cells differentiation. May play a role in vesicular transport from endoplasmic reticulum to Golgi. This Homo sapiens (Human) protein is Trafficking protein particle complex subunit 9 (TRAPPC9).